A 1614-amino-acid polypeptide reads, in one-letter code: Protein scribble homolog (1614 aa).

Positions 1–809 are sufficient for targeting to adherens junction and to inhibit cell proliferation; it reads MLKCIPLWRC…MRLWRERMVE (809 aa). LRR repeat units follow at residues 11 to 34, 35 to 58, 59 to 81, 83 to 105, 107 to 127, 128 to 150, 151 to 173, 174 to 196, 197 to 219, 221 to 242, 243 to 265, 267 to 288, 289 to 311, 312 to 334, 336 to 357, 359 to 380, and 382 to 405; these read NRHV…IYRY, SRSL…FFRL, LNLR…VANF, QLVE…KFCK, LEIA…FTQL, RSLA…VGNL, ANLV…LSFL, VKLE…LGAL, PNLR…LGNL, RLVC…LGGL, LLLT…IGQL, QLSI…IGDC, ENLS…LGKL, TKLT…IGGC, ALSV…LAHT, ELHV…LTHL, and LKAL…DDAQ. Serine 37 carries the post-translational modification Phosphoserine. Threonine 378 is modified (phosphothreonine). 3 disordered regions span residues 417-441, 462-608, and 636-692; these read PQQP…SDAP, GAAA…RLIR, and AQPD…VVSA. The span at 428 to 437 shows a compositional bias: polar residues; the sequence is GLQSSPSESW. Phosphothreonine is present on threonine 475. The span at 479–494 shows a compositional bias: basic and acidic residues; the sequence is SELKVMKRGVEERRGE. The segment covering 516–533 has biased composition (polar residues); sequence TESGLSEDSQPSTGTASQ. Low complexity predominate over residues 548-557; the sequence is QQEAAPNAQE. Acidic residues predominate over residues 662 to 686; sequence EEEDEEDEEEDEEEEEVAVAEEDKE. Positions 664–691 form a coiled coil; sequence EDEEDEEEDEEEEEVAVAEEDKEEAVVS. Residues serine 699 and serine 755 each carry the phosphoserine modification. Residues 708–1219 form an interaction with ARHGEF7 region; sequence IEPARIEEEE…SLESVSSIDR (512 aa). The 88-residue stretch at 719–806 folds into the PDZ 1 domain; that stretch reads TLTIVRQTGG…TVQMRLWRER (88 aa). The segment at 719-1184 is required for interaction with VIM; sequence TLTIVRQTGG…TVLVCDGFDT (466 aa). A Phosphothreonine modification is found at threonine 817. Phosphoserine is present on residues serine 826, serine 866, and serine 930. A PDZ 2 domain is found at 853 to 941; that stretch reads VACLVRSEKG…TIALLLEREA (89 aa). The disordered stretch occupies residues 940 to 971; that stretch reads EAGGPLPPSPLPHSPPPPVTAPSTVVTASPGE. Residues 944–959 show a composition bias toward pro residues; it reads PLPPSPLPHSPPPPVT. A compositionally biased stretch (low complexity) spans 960–969; it reads APSTVVTASP. 2 PDZ domains span residues 994–1083 and 1090–1178; these read EICL…RRDP and ELCI…TVLV. Residues serine 1130, serine 1210, serine 1213, serine 1216, serine 1222, serine 1260, serine 1268, and serine 1271 each carry the phosphoserine modification. The disordered stretch occupies residues 1214–1448; the sequence is VSSIDRELSP…LPDRALSPAE (235 aa). Residues 1217 to 1232 show a composition bias toward basic and acidic residues; it reads IDRELSPEGCGKEKEP. Position 1304 is a phosphothreonine (threonine 1304). Serine 1310 is subject to Phosphoserine. Residues 1315–1327 show a composition bias toward basic and acidic residues; the sequence is SFRERQKYFELEV. The residue at position 1340 (serine 1340) is a Phosphoserine. Residues 1341–1368 adopt a coiled-coil conformation; it reads LVGADDLRKMQEEEARKLQQKRAQLMRE. A compositionally biased stretch (basic and acidic residues) spans 1345 to 1357; that stretch reads DDLRKMQEEEARK. Over residues 1378-1390 the composition is skewed to acidic residues; it reads LDGEAPDDEEPEE. The span at 1396 to 1408 shows a compositional bias: low complexity; it reads GPAAGLSPSSPQP. Phosphoserine is present on residues serine 1402 and serine 1405. The segment covering 1418 to 1429 has biased composition (basic and acidic residues); the sequence is AKAERRHQERLR. Serine 1432, serine 1445, and serine 1467 each carry phosphoserine. A disordered region spans residues 1476–1524; it reads QMVLSKSQEGRSRRGPLERLAEAPSPAPTPSPTPVEDLGLQTSTSPGRL. Residues 1483–1496 show a composition bias toward basic and acidic residues; it reads QEGRSRRGPLERLA. Serine 1500 carries the post-translational modification Phosphoserine. A Phosphothreonine modification is found at threonine 1504. Phosphoserine occurs at positions 1506, 1520, and 1550. The interval 1581–1614 is disordered; sequence GRPSPGTVGPEEVTLCSSRRPVRPGRRGLGPVPS.

This sequence belongs to the LAP (LRR and PDZ) protein family. As to quaternary structure, interacts with UBE3A. Interacts with PAK1 and PAK2. Interacts (via PDZ domains) with VANGL2. Interacts (via PDZ domains) with LPP and TRIP6; the interaction is direct. Interacts (via PDZ domains) with TJP2. Interacts (via PDZ domains) with APC; may mediate APC targeting to adherens junctions of epithelial cells. Interacts (via PDZ domains) with TSHR; regulates TSHR trafficking and function. Interacts with ARHGEF7 and GIT1; interacts directly with ARHGEF7. Interacts with CTNNB1. Interacts with MAPK12. Interacts (via PDZ domains 1 and 3) with MCC. Interacts with DLG5. Interacts with STK4/MST1 and LATS1 in the presence of DLG5. Interacts (via PDZ domain 3) with CRTAM (via PDZ-binding motif); the interaction promotes CRTAM and SCRIB polarization in a subset of CD4+ T-cells. Interacts with YES1, when YES1 is in a closed conformation; the interaction facilitates YES1 autophosphorylation. Interacts (via PDZ domains) with VIM; the interaction protects SCRIB from proteasomal degradation and facilitates SCRIB localization to intermediate filaments, the interaction is reduced by cell contact inhibition. Post-translationally, ubiquitinated; targeted for UBE3A-dependent multiubiquitination and degraded. Palmitoylated. Could be depalmitoylated by LYPLA1 and/or LYPLA2. Palmitoylation of SCRIB by ZDHHC7 is required for its localization to cell-cell junctions, function in the establishement of epithelial cell polarity and the regulation of downstream signaling pathways important for epithelial cell differentiation.

It localises to the cell membrane. The protein resides in the cell junction. Its subcellular location is the adherens junction. It is found in the cell projection. The protein localises to the lamellipodium. It localises to the cytoplasm. The protein resides in the postsynapse. Its subcellular location is the presynapse. In terms of biological role, scaffold protein involved in different aspects of polarized cell differentiation regulating epithelial and neuronal morphogenesis and T-cell polarization. Via its interaction with CRTAM, required for the late phase polarization of a subset of CD4+ T-cells, which in turn regulates TCR-mediated proliferation and IFNG and IL22 production. Plays a role in cell directional movement, cell orientation, cell sheet organization and Golgi complex polarization at the cell migration front. Promotes epithelial cell layer barrier function via maintaining cell-cell adhesion. Most probably functions in the establishment of apico-basal cell polarity. May function in cell proliferation regulating progression from G1 to S phase and as a positive regulator of apoptosis for instance during acinar morphogenesis of the mammary epithelium. May regulate cell invasion via MAPK-mediated cell migration and adhesion. May play a role in exocytosis and in the targeting of synaptic vesicles to synapses. Functions as an activator of Rac GTPase activity. This is Protein scribble homolog from Canis lupus familiaris (Dog).